Here is a 213-residue protein sequence, read N- to C-terminus: Glycerol-3-phosphate acyltransferase (213 aa).

6 helical membrane passes run isoleucine 3–glycine 23, isoleucine 55–glycine 75, serine 80–phenylalanine 100, alanine 110–leucine 130, serine 142–leucine 162, and leucine 163–phenylalanine 183.

It belongs to the PlsY family. As to quaternary structure, probably interacts with PlsX.

The protein resides in the cell membrane. It catalyses the reaction an acyl phosphate + sn-glycerol 3-phosphate = a 1-acyl-sn-glycero-3-phosphate + phosphate. It functions in the pathway lipid metabolism; phospholipid metabolism. Its function is as follows. Catalyzes the transfer of an acyl group from acyl-phosphate (acyl-PO(4)) to glycerol-3-phosphate (G3P) to form lysophosphatidic acid (LPA). This enzyme utilizes acyl-phosphate as fatty acyl donor, but not acyl-CoA or acyl-ACP. This Streptococcus thermophilus (strain CNRZ 1066) protein is Glycerol-3-phosphate acyltransferase.